The chain runs to 249 residues: Olfactory receptor 1571 (249 aa).

Residues 1-9 traverse the membrane as a helical segment; that stretch reads LLMCNLCFA. Topologically, residues 10–40 are extracellular; that stretch reads DICFTSASIPTNLVNIQTKNKVITYEGCISQ. A disulfide bridge links Cys-37 with Cys-119. A helical transmembrane segment spans residues 41–60; the sequence is VYFFILFGVLDNFLLAVMAY. The Cytoplasmic segment spans residues 61–82; it reads DRYVAICHPLHYTVIMNRRLCG. A helical membrane pass occupies residues 83–103; sequence LLVLGSWVTTALNSLLQSSMA. At 104 to 136 the chain is on the extracellular side; the sequence is LRLSFCTDLKIPHFVCELNQLVLLACNDTFPND. The N-linked (GlcNAc...) asparagine glycan is linked to Asn-130. A helical transmembrane segment spans residues 137–158; that stretch reads MVMYFAAVLLGGGPLAGILYSY. Over 159-180 the chain is Cytoplasmic; it reads SKIVSSIRAISSSQGKYKAFST. A helical membrane pass occupies residues 181-200; the sequence is CASHLSVVSLFYSTLLGVYL. The Extracellular portion of the chain corresponds to 201-210; the sequence is SSSFTQNSHS. The chain crosses the membrane as a helical span at residues 211-232; that stretch reads TARASVMYSVVTPMLNPFIYSL. At 233-249 the chain is on the cytoplasmic side; the sequence is RNKDLMGALRRLFRRKP.

It belongs to the G-protein coupled receptor 1 family. As to expression, tongue specific.

It localises to the cell membrane. Functionally, possible taste receptor. The protein is Olfactory receptor 1571 (Olr1571) of Rattus norvegicus (Rat).